The following is a 268-amino-acid chain: Satratoxin biosynthesis SC1 cluster protein 4 (268 aa).

4 consecutive transmembrane segments (helical) span residues 34 to 54 (VWLVGIVQGCWGIAILLVHIF), 78 to 98 (LFAIYEALNSVLDFIVAGLAI), 113 to 133 (HLAGLFVLGAFSGFIGIIKIV), and 145 to 165 (AVIWNVVQMSISIICCCAPIY).

This sequence belongs to the SAT4 family.

It localises to the membrane. The protein operates within mycotoxin biosynthesis. Its function is as follows. Part of the satratoxin SC1 cluster involved in the biosynthesis of satratoxins, trichothecene mycotoxins that are associated with human food poisonings. Satratoxins are suggested to be made by products of multiple gene clusters (SC1, SC2 and SC3) that encode 21 proteins in all, including polyketide synthases, acetyltransferases, and other enzymes expected to modify the trichothecene skeleton. SC1 encodes 10 proteins, SAT1 to SAT10. The largest are SAT8, which encodes a putative polyketide synthase (PKS) with a conventional non-reducing architecture, and SAT10, a putative protein containing four ankyrin repeats and thus may be involved in protein scaffolding. The putative short-chain reductase SAT3 may assist the PKS in some capacity. SAT6 contains a secretory lipase domain and acts probably as a trichothecene esterase. SAT5 encodes a putative acetyltransferase, and so, with SAT6, may affect endogenous protection from toxicity. The probable transcription factor SAT9 may regulate the expression of the SC1 cluster. SC2 encodes proteins SAT11 to SAT16, the largest of which encodes the putative reducing PKS SAT13. SAT11 is a cytochrome P450 monooxygenase, while SAT14 and SAT16 are probable acetyltransferases. The SC2 cluster may be regulated by the transcription factor SAT15. SC3 is a small cluster that encodes 5 proteins, SAT17 to SAT21. SAT21 is a putative MFS-type transporter which may have a role in exporting secondary metabolites. The four other proteins putatively encoded in SC3 include the taurine hydroxylase-like protein SAT17, the O-methyltransferase SAT18, the acetyltransferase SAT19, and the Cys6-type zinc finger SAT20, the latter being probably involved in regulation of SC3 expression. The protein is Satratoxin biosynthesis SC1 cluster protein 4 of Stachybotrys chartarum (strain CBS 109288 / IBT 7711) (Toxic black mold).